A 1106-amino-acid chain; its full sequence is MTSGGKVRIYELSRDLGLDNRDVLNAAEKLSIAAKSHSSSISDGEAAKIKALLNSNGKAAGGAKAPAKPDAGNQILSLKKAPSTPSQSAGAPASAPPSRKPEIVAKPAAPASPAKPAPSAPPSRKPEIVAKPAAPASPAKPAPSAPPSRKPEVVAKPAAPASPAKPAPKPVAKPVAKPASAPAPARPAQPLRPQASNRPPQQPSNRPPARPAAKPPVVMSKPTAPPPRPARPGAPAPRRDQNRPAVPMRPPNQQQRPSPQRSGPPRSGAPIRPGAPQRPGMPGRGGAPQQRRGPGGPGGRPPSSLELVGKPIRREPNAPQGRQGGAPSRPGGPGGMRKPVSPGELMQLQKPGSRPTPGDGPRRPPARPGSEAPRRPGEAPNRPNAPTAPPRRPGYRPAAAPGMAGRPRRPDWDDSARLDALRSRSPQKQRQKVHIIGENDDSLAAQTGGFAGGQEALVLQASLARPSKPKNLPGNKGARPVALRRRKKETTRQRQRRRAMELRQAREAKQIRPEMLVVPEGNLTVQELADKLSVESSEIIKSLFFKGIIATVTQTLDLESIEKVSQEFGVPVLQDDIEEAAKKTVEMIEESDLDHLIRRPPVVTVMGHVDHGKTSLLDAIRKTRVAAGEAGGITQHIGAYQVDVDHAGASKKVTFLDTPGHEAFTAMRARGTKVTDVAILVVAADDGVRPQTLEAISHARAAEVPIVVAINKVDKEGAQIDRVKQELSDQSLLAEDWGGDTVMVPVSALKGEGLDKLLEMILLVTEVEDLKANPERMAKGTVVEAHLDKAKGPVATLLVQNGTLRPGDVVAAGPVLGKVRAMVNDSGRRVKEAAPSSAVEVLGFSEVPAAGDEFEVYPDEKAARSVVGDRASEARATRLAQQMASRRVSLTSMSGQASEGELKELNLILKADVQGSVEAILGMLEQLPQGEVQVRVLLSAPGEVTETDVDLAAASGAVIVGFNTTLASGARRAAELAGVDVRDYNVIYKLLEDIQAAMEGLLEPELVESPLGEAEVRAVFSIGKSAVAGCYVTSGSIQRNCKIRVHRGKQLVFSGDLDSLKRMKNDVKEVNTGFECGFGCDRFADWQEGDRVEAFAMVTQRRTLAT.

Low complexity-rich tracts occupy residues 57-72 and 81-97; these read GKAA…PDAG and APST…SAPP. Disordered regions lie at residues 57–434 and 466–497; these read GKAA…QKVH and PSKP…RQRR. Composition is skewed to pro residues over residues 113-123 and 138-148; these read PAKPAPSAPPS. Over residues 172-199 the composition is skewed to low complexity; the sequence is AKPVAKPASAPAPARPAQPLRPQASNRP. Pro residues-rich tracts occupy residues 200–214 and 223–235; these read PQQP…PAAK and TAPP…PGAP. 3 stretches are compositionally biased toward low complexity: residues 251–292, 319–329, and 395–405; these read PNQQ…QQRR, PQGRQGGAPSR, and YRPAAAPGMAG. The segment covering 408–422 has biased composition (basic and acidic residues); it reads RRPDWDDSARLDALR. A compositionally biased stretch (basic residues) spans 482 to 497; that stretch reads ALRRRKKETTRQRQRR. Residues 598 to 771 form the tr-type G domain; it reads RRPPVVTVMG…LLVTEVEDLK (174 aa). The G1 stretch occupies residues 607–614; sequence GHVDHGKT. Residue 607–614 coordinates GTP; the sequence is GHVDHGKT. The tract at residues 632-636 is G2; that stretch reads GITQH. The interval 657 to 660 is G3; that stretch reads DTPG. GTP is bound by residues 657 to 661 and 711 to 714; these read DTPGH and NKVD. Residues 711–714 are G4; sequence NKVD. A G5 region spans residues 747-749; that stretch reads SAL.

This sequence belongs to the TRAFAC class translation factor GTPase superfamily. Classic translation factor GTPase family. IF-2 subfamily.

It localises to the cytoplasm. One of the essential components for the initiation of protein synthesis. Protects formylmethionyl-tRNA from spontaneous hydrolysis and promotes its binding to the 30S ribosomal subunits. Also involved in the hydrolysis of GTP during the formation of the 70S ribosomal complex. The chain is Translation initiation factor IF-2 from Synechococcus sp. (strain RCC307).